Here is a 324-residue protein sequence, read N- to C-terminus: Glyoxylate/hydroxypyruvate reductase B (324 aa).

Catalysis depends on residues arginine 237 and glutamate 266. Catalysis depends on histidine 285, which acts as the Proton donor.

Belongs to the D-isomer specific 2-hydroxyacid dehydrogenase family. GhrB subfamily. As to quaternary structure, homodimer.

It localises to the cytoplasm. The catalysed reaction is glycolate + NADP(+) = glyoxylate + NADPH + H(+). It catalyses the reaction (R)-glycerate + NAD(+) = 3-hydroxypyruvate + NADH + H(+). The enzyme catalyses (R)-glycerate + NADP(+) = 3-hydroxypyruvate + NADPH + H(+). Functionally, catalyzes the NADPH-dependent reduction of glyoxylate and hydroxypyruvate into glycolate and glycerate, respectively. In Escherichia fergusonii (strain ATCC 35469 / DSM 13698 / CCUG 18766 / IAM 14443 / JCM 21226 / LMG 7866 / NBRC 102419 / NCTC 12128 / CDC 0568-73), this protein is Glyoxylate/hydroxypyruvate reductase B.